We begin with the raw amino-acid sequence, 116 residues long: Guanylin (116 aa).

An N-terminal signal peptide occupies residues 1–23 (MNACVLSVLCLLGALAVLVEGVT). A propeptide spanning residues 24–101 (VQDGDLSFPL…LQRLEAIAQD (78 aa)) is cleaved from the precursor. 3 disulfides stabilise this stretch: C69-C83, C105-C113, and C108-C116.

This sequence belongs to the guanylin family. As to expression, localized in both crypts and villi in the small intestine and to superficial epithelial cells in the colon.

It localises to the secreted. In terms of biological role, endogenous activator of intestinal guanylate cyclase. It stimulates this enzyme through the same receptor binding region as the heat-stable enterotoxins. This Mus musculus (Mouse) protein is Guanylin (Guca2a).